The sequence spans 257 residues: Protein orai-2 (257 aa).

Helical transmembrane passes span 62–79, 94–114, 156–176, and 201–221; these read ASSR…VAMV, LIAF…ALLI, LGIL…FLPI, and LVST…TIHF.

It belongs to the Orai family.

It localises to the membrane. Functionally, ca(2+) release-activated Ca(2+)-like (CRAC-like) channel subunit which mediates Ca(2+) influx and increase in Ca(2+)-selective current by synergy with the Ca(2+) sensor, stim1. The sequence is that of Protein orai-2 (orai2) from Xenopus laevis (African clawed frog).